A 264-amino-acid polypeptide reads, in one-letter code: MAAPGEALTPQGYIQHHLTNLHVGEGFWTWHIDSLFFSVGLGVLFLWIFRSVGKKATSGVPGKLQCFIEMIVEFVDNSVKESFHGRNALIAPLALTIFMWVFMMNFMDMIPVDWLPWLASLAGIPYLKVVPTTDVNITFSLAIGVFVLIIYYSIKVKGVSGFVKELTLQPFNHKAMIPVNLLLETVTLIAKPISLALRLFGNLYAGELIFILIALMYGTNLLLSSLGVTLQLGWLIFHILVITLQAFIFMMLTIVYLSMAHEDH.

6 helical membrane passes run 29–49, 90–110, 134–154, 177–197, 208–228, and 235–255; these read TWHI…LWIF, IAPL…MDMI, DVNI…YYSI, IPVN…SLAL, LIFI…SLGV, and LIFH…LTIV.

The protein belongs to the ATPase A chain family. F-type ATPases have 2 components, CF(1) - the catalytic core - and CF(0) - the membrane proton channel. CF(1) has five subunits: alpha(3), beta(3), gamma(1), delta(1), epsilon(1). CF(0) has three main subunits: a(1), b(2) and c(9-12). The alpha and beta chains form an alternating ring which encloses part of the gamma chain. CF(1) is attached to CF(0) by a central stalk formed by the gamma and epsilon chains, while a peripheral stalk is formed by the delta and b chains.

Its subcellular location is the cell inner membrane. Its function is as follows. Key component of the proton channel; it plays a direct role in the translocation of protons across the membrane. The chain is ATP synthase subunit a from Shewanella oneidensis (strain ATCC 700550 / JCM 31522 / CIP 106686 / LMG 19005 / NCIMB 14063 / MR-1).